The following is a 416-amino-acid chain: Leu/Ile/Val-binding protein homolog 4 (416 aa).

An N-terminal signal peptide occupies residues M1 to A26.

This sequence belongs to the leucine-binding protein family.

Component of an amino-acid transport system. The chain is Leu/Ile/Val-binding protein homolog 4 from Brucella abortus (strain 2308).